The chain runs to 112 residues: MSGKIKVTFIINDGEEKTVEAPIGLSILEIAHSNDLDLEGACEGSLACATCHVILEEEFYNKLKKPTEAEEDMLDLAFGLTDTSRLGCQIILTEELDGIKVRLPSATRNIKL.

Residues 5-107 enclose the 2Fe-2S ferredoxin-type domain; that stretch reads IKVTFIINDG…GIKVRLPSAT (103 aa). Positions 42, 48, 51, and 88 each coordinate [2Fe-2S] cluster.

This sequence belongs to the adrenodoxin/putidaredoxin family. [2Fe-2S] cluster serves as cofactor.

In terms of biological role, ferredoxin are iron-sulfur proteins that transfer electrons in a wide variety of metabolic reactions. The protein is 2Fe-2S ferredoxin (fdxB) of Rickettsia montanensis.